Here is a 253-residue protein sequence, read N- to C-terminus: MDEATGETETQDFMNVESFSQLPFIRRPKDKNPKPIRVFGKDFTGRDFSITTGQEDYTDPYQTKNKEEEEEEDQTGDNSTDNNSISHNRRFECHYCFRNFPTSQALGGHQNAHKRERQLAKRGVSSYFYHPDNNPYSYRHYPSWTNGPLTAARSYGGFSSGPKPSGYYTRPSYGSQLGLWRLPPRVQGVYNSNAAFTSNGSSSSSNSTLPLLTRSQTQLSSQVGGSAAQNRMSSYGYGLSPNVQDHVSLDLHL.

Over residues 1 to 10 the composition is skewed to acidic residues; that stretch reads MDEATGETET. Positions 1 to 85 are disordered; that stretch reads MDEATGETET…GDNSTDNNSI (85 aa). Composition is skewed to polar residues over residues 11–21, 49–63, and 76–85; these read QDFMNVESFSQ, SITT…PYQT, and GDNSTDNNSI. The C2H2-type zinc-finger motif lies at 91–113; it reads FECHYCFRNFPTSQALGGHQNAH.

Expressed in inflorescence meristems, floral meristems and stem epidermis.

It is found in the nucleus. Its function is as follows. Probable transcription factor required for the initiation of inflorescence trichomes in response to gibberellin (GA). Mediates the induction of GL1 expression by GA in inflorescence organs and is antagonized in its action by the DELLA repressor GAI. Acts upstream of the trichome initiation regulators GL1 and GL3, and downstream of the GA signaling repressor SPINDLY (SPY). Does not play a significant role in the cytokinin response. Controls trichome branching through GA signaling. Acts downstream of the key regulator STICHEL (STI) in an endoreduplication-independent pathway. Controls trichome cell division indirectly by acting downstream of a key endoreduplication regulator SIAMESE (SIM). In Arabidopsis thaliana (Mouse-ear cress), this protein is Zinc finger protein GIS (GIS).